The primary structure comprises 172 residues: 3-hydroxydecanoyl-[acyl-carrier-protein] dehydratase (172 aa).

The active site involves His71.

It belongs to the thioester dehydratase family. FabA subfamily. In terms of assembly, homodimer.

It is found in the cytoplasm. The enzyme catalyses a (3R)-hydroxyacyl-[ACP] = a (2E)-enoyl-[ACP] + H2O. It carries out the reaction (3R)-hydroxydecanoyl-[ACP] = (2E)-decenoyl-[ACP] + H2O. It catalyses the reaction (2E)-decenoyl-[ACP] = (3Z)-decenoyl-[ACP]. It participates in lipid metabolism; fatty acid biosynthesis. Functionally, necessary for the introduction of cis unsaturation into fatty acids. Catalyzes the dehydration of (3R)-3-hydroxydecanoyl-ACP to E-(2)-decenoyl-ACP and then its isomerization to Z-(3)-decenoyl-ACP. Can catalyze the dehydratase reaction for beta-hydroxyacyl-ACPs with saturated chain lengths up to 16:0, being most active on intermediate chain length. This is 3-hydroxydecanoyl-[acyl-carrier-protein] dehydratase from Escherichia coli O127:H6 (strain E2348/69 / EPEC).